We begin with the raw amino-acid sequence, 476 residues long: Probable protein S-acyltransferase 5 (476 aa).

Residues 1–11 show a composition bias toward basic and acidic residues; the sequence is MLDLQPSDRRH. The interval 1–21 is disordered; it reads MLDLQPSDRRHGAPSSSGGVS. 2 helical membrane passes run 53–73 and 85–105; these read SILI…IFVG and GVSV…FLLL. The tract at residues 119–138 is disordered; it reads YPPEPESNEGNGEPRLAHTP. Positions 158-208 constitute a DHHC domain; the sequence is KYCDTCMLYRPPRASHCSICNNCVEKFDHHCPWLGQCIGLRNYRFYFMFVL. Cysteine 188 acts as the S-palmitoyl cysteine intermediate in catalysis. 2 consecutive transmembrane segments (helical) span residues 209-223 and 246-266; these read CSTL…FCWI and SIAL…LTCF. Disordered stretches follow at residues 320–340 and 373–454; these read SKEP…PSLQ and VASR…ASRD. Position 336 is a phosphoserine (serine 336). Positions 387–412 are enriched in basic and acidic residues; that stretch reads SEGRGIMHSRESSRGRGIMHSRESSR. Serine 418 carries the phosphoserine modification. The segment covering 425 to 441 has biased composition (basic and acidic residues); the sequence is VNEDLRTRDESVSRVGE.

Belongs to the DHHC palmitoyltransferase family.

The protein resides in the cell membrane. The enzyme catalyses L-cysteinyl-[protein] + hexadecanoyl-CoA = S-hexadecanoyl-L-cysteinyl-[protein] + CoA. In terms of biological role, palmitoyl acyltransferase. The chain is Probable protein S-acyltransferase 5 (PAT05) from Arabidopsis thaliana (Mouse-ear cress).